Reading from the N-terminus, the 141-residue chain is Large ribosomal subunit protein uL11 (141 aa).

It belongs to the universal ribosomal protein uL11 family. Part of the ribosomal stalk of the 50S ribosomal subunit. Interacts with L10 and the large rRNA to form the base of the stalk. L10 forms an elongated spine to which L12 dimers bind in a sequential fashion forming a multimeric L10(L12)X complex. In terms of processing, one or more lysine residues are methylated.

Forms part of the ribosomal stalk which helps the ribosome interact with GTP-bound translation factors. In Chlamydia caviae (strain ATCC VR-813 / DSM 19441 / 03DC25 / GPIC) (Chlamydophila caviae), this protein is Large ribosomal subunit protein uL11.